Consider the following 320-residue polypeptide: Pyrroline-5-carboxylate reductase 1, mitochondrial (320 aa).

Ser-2 carries the post-translational modification N-acetylserine. NADP(+)-binding positions include 6–11 and Ser-34; that span reads IGAGQL. Ala-8, Gln-10, Leu-11, Ser-34, Asp-36, Asn-56, Val-70, Lys-71, and Ala-97 together coordinate NADPH. NADP(+) is bound by residues Asn-56, 69 to 72, and 95 to 97; these read AVKP and CAA. Residue Glu-164 participates in L-proline binding. Asn-230 contributes to the NADPH binding site. L-proline is bound by residues Ala-237 and Thr-238. At Ser-278 the chain carries Phosphoserine. Positions 292–320 are disordered; it reads LDSPPGTSLAPSGHSKLLPRSMAPAGKQD.

The protein belongs to the pyrroline-5-carboxylate reductase family. In terms of assembly, homodecamer; composed of 5 homodimers. Interacts with LTO1.

Its subcellular location is the mitochondrion. The catalysed reaction is L-proline + NADP(+) = (S)-1-pyrroline-5-carboxylate + NADPH + 2 H(+). It carries out the reaction L-proline + NAD(+) = (S)-1-pyrroline-5-carboxylate + NADH + 2 H(+). Its pathway is amino-acid biosynthesis; L-proline biosynthesis; L-proline from L-glutamate 5-semialdehyde: step 1/1. In terms of biological role, oxidoreductase that catalyzes the last step in proline biosynthesis, which corresponds to the reduction of pyrroline-5-carboxylate to L-proline using NAD(P)H. At physiologic concentrations, has higher specific activity in the presence of NADH. Involved in the cellular response to oxidative stress. The sequence is that of Pyrroline-5-carboxylate reductase 1, mitochondrial (PYCR1) from Bos taurus (Bovine).